Reading from the N-terminus, the 381-residue chain is Succinyl-diaminopimelate desuccinylase (381 aa).

Histidine 69 serves as a coordination point for Zn(2+). Aspartate 71 is a catalytic residue. Residue aspartate 103 participates in Zn(2+) binding. Catalysis depends on glutamate 137, which acts as the Proton acceptor. Glutamate 138, glutamate 166, and histidine 355 together coordinate Zn(2+).

This sequence belongs to the peptidase M20A family. DapE subfamily. As to quaternary structure, homodimer. Zn(2+) serves as cofactor. Co(2+) is required as a cofactor.

The catalysed reaction is N-succinyl-(2S,6S)-2,6-diaminopimelate + H2O = (2S,6S)-2,6-diaminopimelate + succinate. It participates in amino-acid biosynthesis; L-lysine biosynthesis via DAP pathway; LL-2,6-diaminopimelate from (S)-tetrahydrodipicolinate (succinylase route): step 3/3. In terms of biological role, catalyzes the hydrolysis of N-succinyl-L,L-diaminopimelic acid (SDAP), forming succinate and LL-2,6-diaminopimelate (DAP), an intermediate involved in the bacterial biosynthesis of lysine and meso-diaminopimelic acid, an essential component of bacterial cell walls. The sequence is that of Succinyl-diaminopimelate desuccinylase from Rickettsia felis (strain ATCC VR-1525 / URRWXCal2) (Rickettsia azadi).